We begin with the raw amino-acid sequence, 345 residues long: Anthranilate phosphoribosyltransferase (345 aa).

Residues Gly79, 82–83 (GD), Thr87, 89–92 (NVST), 106–114 (KHGNRAVSG), and Ser118 each bind 5-phospho-alpha-D-ribose 1-diphosphate. Gly79 serves as a coordination point for anthranilate. Ser91 contacts Mg(2+). Asn109 provides a ligand contact to anthranilate. Anthranilate is bound at residue Arg164. Positions 223 and 224 each coordinate Mg(2+).

It belongs to the anthranilate phosphoribosyltransferase family. In terms of assembly, homodimer. It depends on Mg(2+) as a cofactor.

It catalyses the reaction N-(5-phospho-beta-D-ribosyl)anthranilate + diphosphate = 5-phospho-alpha-D-ribose 1-diphosphate + anthranilate. It functions in the pathway amino-acid biosynthesis; L-tryptophan biosynthesis; L-tryptophan from chorismate: step 2/5. Functionally, catalyzes the transfer of the phosphoribosyl group of 5-phosphorylribose-1-pyrophosphate (PRPP) to anthranilate to yield N-(5'-phosphoribosyl)-anthranilate (PRA). This is Anthranilate phosphoribosyltransferase from Saccharolobus islandicus (strain M.16.27) (Sulfolobus islandicus).